The chain runs to 252 residues: Imidazole glycerol phosphate synthase subunit HisF (252 aa).

Residues Asp11 and Asp130 contribute to the active site.

This sequence belongs to the HisA/HisF family. Heterodimer of HisH and HisF.

The protein resides in the cytoplasm. The catalysed reaction is 5-[(5-phospho-1-deoxy-D-ribulos-1-ylimino)methylamino]-1-(5-phospho-beta-D-ribosyl)imidazole-4-carboxamide + L-glutamine = D-erythro-1-(imidazol-4-yl)glycerol 3-phosphate + 5-amino-1-(5-phospho-beta-D-ribosyl)imidazole-4-carboxamide + L-glutamate + H(+). It functions in the pathway amino-acid biosynthesis; L-histidine biosynthesis; L-histidine from 5-phospho-alpha-D-ribose 1-diphosphate: step 5/9. IGPS catalyzes the conversion of PRFAR and glutamine to IGP, AICAR and glutamate. The HisF subunit catalyzes the cyclization activity that produces IGP and AICAR from PRFAR using the ammonia provided by the HisH subunit. This is Imidazole glycerol phosphate synthase subunit HisF from Hyphomonas neptunium (strain ATCC 15444).